The following is a 167-amino-acid chain: UPF0225 protein VP1145 (167 aa).

The protein belongs to the UPF0225 family.

The chain is UPF0225 protein VP1145 from Vibrio parahaemolyticus serotype O3:K6 (strain RIMD 2210633).